The primary structure comprises 432 residues: Glutamate-1-semialdehyde 2,1-aminomutase (432 aa).

Lysine 269 is subject to N6-(pyridoxal phosphate)lysine.

It belongs to the class-III pyridoxal-phosphate-dependent aminotransferase family. HemL subfamily. As to quaternary structure, homodimer. Requires pyridoxal 5'-phosphate as cofactor.

It localises to the cytoplasm. The enzyme catalyses (S)-4-amino-5-oxopentanoate = 5-aminolevulinate. Its pathway is porphyrin-containing compound metabolism; protoporphyrin-IX biosynthesis; 5-aminolevulinate from L-glutamyl-tRNA(Glu): step 2/2. It participates in porphyrin-containing compound metabolism; chlorophyll biosynthesis. The polypeptide is Glutamate-1-semialdehyde 2,1-aminomutase (Chloroherpeton thalassium (strain ATCC 35110 / GB-78)).